We begin with the raw amino-acid sequence, 181 residues long: Cytochrome c oxidase subunit 2 (181 aa).

Cu cation is bound by residues C126, E128, C130, H134, and M137. E128 is a Mg(2+) binding site.

Belongs to the cytochrome c oxidase subunit 2 family. Component of the cytochrome c oxidase (complex IV, CIV), a multisubunit enzyme composed of a catalytic core of 3 subunits and several supernumerary subunits. The complex exists as a monomer or a dimer and forms supercomplexes (SCs) in the inner mitochondrial membrane with ubiquinol-cytochrome c oxidoreductase (cytochrome b-c1 complex, complex III, CIII). Requires Cu cation as cofactor.

Its subcellular location is the mitochondrion inner membrane. The catalysed reaction is 4 Fe(II)-[cytochrome c] + O2 + 8 H(+)(in) = 4 Fe(III)-[cytochrome c] + 2 H2O + 4 H(+)(out). In terms of biological role, component of the cytochrome c oxidase, the last enzyme in the mitochondrial electron transport chain which drives oxidative phosphorylation. The respiratory chain contains 3 multisubunit complexes succinate dehydrogenase (complex II, CII), ubiquinol-cytochrome c oxidoreductase (cytochrome b-c1 complex, complex III, CIII) and cytochrome c oxidase (complex IV, CIV), that cooperate to transfer electrons derived from NADH and succinate to molecular oxygen, creating an electrochemical gradient over the inner membrane that drives transmembrane transport and the ATP synthase. Cytochrome c oxidase is the component of the respiratory chain that catalyzes the reduction of oxygen to water. Electrons originating from reduced cytochrome c in the intermembrane space (IMS) are transferred via the dinuclear copper A center (CU(A)) of subunit 2 and heme A of subunit 1 to the active site in subunit 1, a binuclear center (BNC) formed by heme A3 and copper B (CU(B)). The BNC reduces molecular oxygen to 2 water molecules using 4 electrons from cytochrome c in the IMS and 4 protons from the mitochondrial matrix. This Paramecium primaurelia protein is Cytochrome c oxidase subunit 2 (COII).